Consider the following 105-residue polypeptide: uncharacterized protein (105 aa).

A helical transmembrane segment spans residues 29 to 49; it reads NAFLLILSEAYLLFVFLSYLI.

The protein resides in the membrane. This is an uncharacterized protein from Saccharomyces cerevisiae (strain ATCC 204508 / S288c) (Baker's yeast).